A 428-amino-acid chain; its full sequence is Enolase 2 (428 aa).

Gln-162 is a (2R)-2-phosphoglycerate binding site. The Proton donor role is filled by Glu-204. Positions 241, 285, and 312 each coordinate Mg(2+). 4 residues coordinate (2R)-2-phosphoglycerate: Lys-337, Arg-366, Ser-367, and Lys-388. Catalysis depends on Lys-337, which acts as the Proton acceptor.

It belongs to the enolase family. It depends on Mg(2+) as a cofactor.

Its subcellular location is the cytoplasm. The protein localises to the secreted. The protein resides in the cell surface. The enzyme catalyses (2R)-2-phosphoglycerate = phosphoenolpyruvate + H2O. It participates in carbohydrate degradation; glycolysis; pyruvate from D-glyceraldehyde 3-phosphate: step 4/5. Catalyzes the reversible conversion of 2-phosphoglycerate (2-PG) into phosphoenolpyruvate (PEP). It is essential for the degradation of carbohydrates via glycolysis. In Lactobacillus johnsonii (strain CNCM I-12250 / La1 / NCC 533), this protein is Enolase 2.